The following is a 1265-amino-acid chain: Methionine synthase (1265 aa).

The region spanning 19–338 (RDEINAILQK…DHIREIAEAV (320 aa)) is the Hcy-binding domain. Residues cysteine 260, cysteine 323, and cysteine 324 each contribute to the Zn(2+) site. Residues 371–632 (FVNIGERCNV…IHKELLQLCE (262 aa)) form the Pterin-binding domain. (6S)-5,6,7,8-tetrahydrofolate-binding positions include 382-384 (GSR), aspartate 449, asparagine 470, aspartate 537, asparagine 579, arginine 585, and arginine 591. The B12-binding N-terminal domain maps to 662 to 759 (QTDEWRNGPV…FMEKEREETR (98 aa)). Methylcob(III)alamin contacts are provided by residues glutamate 709, 782-786 (GDVHD), histidine 785, serine 830, threonine 834, and alanine 886. One can recognise a B12-binding domain in the interval 772–907 (QGTIVLATVK…DENLKDEYFE (136 aa)). The AdoMet activation domain occupies 923–1265 (SLKERRYLPL…LGPILGYDTD (343 aa)). S-adenosyl-L-methionine-binding positions include aspartate 974, arginine 1172, and 1227–1228 (YF). Residue threonine 1264 is modified to Phosphothreonine.

Belongs to the vitamin-B12 dependent methionine synthase family. Monomer. Dimer. Forms a multiprotein complex with MMACHC, MMADHC and MTRR. The cofactor is methylcob(III)alamin. Zn(2+) is required as a cofactor. In terms of tissue distribution, widely expressed. Expressed at the highest levels in pancreas, heart, brain, skeletal muscle and placenta. Expressed at lower levels in lung, liver and kidney.

The protein resides in the cytoplasm. It carries out the reaction (6S)-5-methyl-5,6,7,8-tetrahydrofolate + L-homocysteine = (6S)-5,6,7,8-tetrahydrofolate + L-methionine. It participates in amino-acid biosynthesis; L-methionine biosynthesis via de novo pathway; L-methionine from L-homocysteine (MetH route): step 1/1. Catalyzes the transfer of a methyl group from methylcob(III)alamin (MeCbl) to homocysteine, yielding enzyme-bound cob(I)alamin and methionine in the cytosol. MeCbl is an active form of cobalamin (vitamin B12) used as a cofactor for methionine biosynthesis. Cob(I)alamin form is regenerated to MeCbl by a transfer of a methyl group from 5-methyltetrahydrofolate. The processing of cobalamin in the cytosol occurs in a multiprotein complex composed of at least MMACHC, MMADHC, MTRR (methionine synthase reductase) and MTR which may contribute to shuttle safely and efficiently cobalamin towards MTR in order to produce methionine. This is Methionine synthase from Homo sapiens (Human).